A 193-amino-acid polypeptide reads, in one-letter code: Ion-translocating oxidoreductase complex subunit A (193 aa).

The next 6 membrane-spanning stretches (helical) occupy residues 5–25 (LLLF…FLGL), 47–67 (FVMT…LIPL), 72–92 (LRTL…EMVV), 102–122 (LLGI…VALL), 134–154 (ALYG…FAAI), and 171–191 (AIAL…SGLV).

It belongs to the NqrDE/RnfAE family. The complex is composed of six subunits: RsxA, RsxB, RsxC, RsxD, RsxE and RsxG.

Its subcellular location is the cell inner membrane. Part of a membrane-bound complex that couples electron transfer with translocation of ions across the membrane. Required to maintain the reduced state of SoxR. This chain is Ion-translocating oxidoreductase complex subunit A, found in Salmonella agona (strain SL483).